The sequence spans 212 residues: Thymidylate kinase (212 aa).

10-17 (GLEGAGKT) serves as a coordination point for ATP.

This sequence belongs to the thymidylate kinase family.

It catalyses the reaction dTMP + ATP = dTDP + ADP. Phosphorylation of dTMP to form dTDP in both de novo and salvage pathways of dTTP synthesis. The sequence is that of Thymidylate kinase from Cronobacter sakazakii (strain ATCC BAA-894) (Enterobacter sakazakii).